A 491-amino-acid polypeptide reads, in one-letter code: Protein nucleotidyltransferase YdiU (491 aa).

Residues glycine 92, glycine 94, arginine 95, lysine 115, aspartate 127, glycine 128, arginine 178, and arginine 185 each contribute to the ATP site. Catalysis depends on aspartate 254, which acts as the Proton acceptor. Mg(2+) contacts are provided by asparagine 255 and aspartate 264. Aspartate 264 serves as a coordination point for ATP.

This sequence belongs to the SELO family. Mg(2+) serves as cofactor. The cofactor is Mn(2+).

It catalyses the reaction L-seryl-[protein] + ATP = 3-O-(5'-adenylyl)-L-seryl-[protein] + diphosphate. The enzyme catalyses L-threonyl-[protein] + ATP = 3-O-(5'-adenylyl)-L-threonyl-[protein] + diphosphate. The catalysed reaction is L-tyrosyl-[protein] + ATP = O-(5'-adenylyl)-L-tyrosyl-[protein] + diphosphate. It carries out the reaction L-histidyl-[protein] + UTP = N(tele)-(5'-uridylyl)-L-histidyl-[protein] + diphosphate. It catalyses the reaction L-seryl-[protein] + UTP = O-(5'-uridylyl)-L-seryl-[protein] + diphosphate. The enzyme catalyses L-tyrosyl-[protein] + UTP = O-(5'-uridylyl)-L-tyrosyl-[protein] + diphosphate. Its function is as follows. Nucleotidyltransferase involved in the post-translational modification of proteins. It can catalyze the addition of adenosine monophosphate (AMP) or uridine monophosphate (UMP) to a protein, resulting in modifications known as AMPylation and UMPylation. This Mycolicibacterium paratuberculosis (strain ATCC BAA-968 / K-10) (Mycobacterium paratuberculosis) protein is Protein nucleotidyltransferase YdiU.